Here is a 193-residue protein sequence, read N- to C-terminus: dTTP/UTP pyrophosphatase (193 aa).

The active-site Proton acceptor is the Asp-77.

The protein belongs to the Maf family. YhdE subfamily. It depends on a divalent metal cation as a cofactor.

The protein localises to the cytoplasm. It catalyses the reaction dTTP + H2O = dTMP + diphosphate + H(+). The catalysed reaction is UTP + H2O = UMP + diphosphate + H(+). Functionally, nucleoside triphosphate pyrophosphatase that hydrolyzes dTTP and UTP. May have a dual role in cell division arrest and in preventing the incorporation of modified nucleotides into cellular nucleic acids. The polypeptide is dTTP/UTP pyrophosphatase (Bacteroides thetaiotaomicron (strain ATCC 29148 / DSM 2079 / JCM 5827 / CCUG 10774 / NCTC 10582 / VPI-5482 / E50)).